A 689-amino-acid polypeptide reads, in one-letter code: MSKIRVYEYAKKYNISSKEIITKLKEMNIEVSNHMTMLDDEVVNKLDNEYNNEVKKPSVADEFEVEEKVVRSKKNSNKKKKKGKGNQDKRQENFAGKQQAQTVETPDKITFSGTLTVGELANKLGKEPSEIIKKLFMLGIMATINQDLDKDTIELIASDYGIEVEEEVVIDEIEFETFIDEQDEEEGDLKERPAVVTIMGHVDHGKTTLLDSIRNSKVTAGEAGGITQHIGAYQVEVNDKKITFLDTPGHAAFTTMRARGAQVTDITILVVAADDGVMPQTVEAINHAKAAGVPIIVAVNKMDKPAANPDRVMQELTEYELVPEAWGGDTIFVPISAIKGEGIDNLLEMILLVSEVEEYKANPNRYATGTVIEAQLDKGKGAIATLLVQNGTLRVGDPIVVGTTYGRVRAMVNDIGRRVKVAGPSTPVEITGLNEVPQAGDRFMAFADEKKARQIGESRAQQALLAQRGEKSKLSLEDLFQQIQEGDVKEINLIVKADVQGSVEAMAASLRKIDVEGVKVKIIHTGVGAITESDIILASASNAIVIGFNVRPDVNAKRTAESENVDIRLHRIIYKAIEEIEAAMRGMLDPEFEEKVIGQAEVRQTFKVTKVGTIAGCYVTDGKITRDSGVRIIRDGVVIYEGQLDTLKRFKDDVKEVAQNYECGITIEKYNDIKEGDIIEAFIMEEVKR.

Residues 70-107 are disordered; sequence VRSKKNSNKKKKKGKGNQDKRQENFAGKQQAQTVETPD. A compositionally biased stretch (basic residues) spans 71-84; sequence RSKKNSNKKKKKGK. Residues 191–360 form the tr-type G domain; sequence ERPAVVTIMG…LLVSEVEEYK (170 aa). The segment at 200 to 207 is G1; the sequence is GHVDHGKT. 200 to 207 is a binding site for GTP; sequence GHVDHGKT. The interval 225–229 is G2; that stretch reads GITQH. Positions 246-249 are G3; that stretch reads DTPG. Residues 246-250 and 300-303 each bind GTP; these read DTPGH and NKMD. The G4 stretch occupies residues 300–303; sequence NKMD. The tract at residues 336-338 is G5; the sequence is SAI.

Belongs to the TRAFAC class translation factor GTPase superfamily. Classic translation factor GTPase family. IF-2 subfamily.

It localises to the cytoplasm. Its function is as follows. One of the essential components for the initiation of protein synthesis. Protects formylmethionyl-tRNA from spontaneous hydrolysis and promotes its binding to the 30S ribosomal subunits. Also involved in the hydrolysis of GTP during the formation of the 70S ribosomal complex. This chain is Translation initiation factor IF-2, found in Bacillus cytotoxicus (strain DSM 22905 / CIP 110041 / 391-98 / NVH 391-98).